We begin with the raw amino-acid sequence, 564 residues long: MFS-type transporter dmxR4 (564 aa).

The interval Met-1–Ala-61 is disordered. The span at Thr-25 to Gln-44 shows a compositional bias: polar residues. A compositionally biased stretch (basic and acidic residues) spans Pro-47–Pro-57. A run of 5 helical transmembrane segments spans residues Ile-71–Ile-91, Ala-106–Leu-126, Thr-138–Pro-158, Leu-169–Ile-189, and Gly-199–Phe-219. N-linked (GlcNAc...) asparagine glycosylation is present at Asn-222. The next 7 membrane-spanning stretches (helical) occupy residues Trp-227–Met-247, Gly-265–Leu-285, Ile-299–Phe-319, Gly-348–Phe-368, Ser-376–Phe-396, Trp-405–Leu-425, and Ser-438–Gly-458. Asn-469 is a glycosylation site (N-linked (GlcNAc...) asparagine). The next 2 helical transmembrane spans lie at Leu-470–Leu-490 and Val-512–Trp-532. Residues Ser-534–Val-564 form a disordered region. A compositionally biased stretch (basic and acidic residues) spans Gly-539–Val-564.

Belongs to the major facilitator superfamily. TCR/Tet family.

The protein resides in the membrane. Functionally, MFS-type transporter; part of the gene cluster that mediates the biosynthesis of the dimeric xanthones cryptosporioptides. In Cryptosporiopsis sp. (strain 8999), this protein is MFS-type transporter dmxR4.